The following is an 820-amino-acid chain: MGTNGTTCPGPMKATSNGVFQGENPLEHALPLLILQICIVLLLTRLLAFLLRPLRQPRVIAEIVGGILLGPSALGKSTKFINTVFPPKSLTVLDTLANLGLIFFLFLVGLELDPKSLKRTGKRALSIALAGITLPFVLGIGTSFALRSSIADGASKAPFLVFMGVALSITAFPVLARILAEIKLLTTDIGKIALSAAAVNDVAAWILLALAVALSGEGSSPLTSLWVFLSGCGFVLFCIFVVQPGIKLIAKRCPEGEPVNELYVCCTLGIVLAASFVTDFIGIHALFGAFVIGVIFPKEGNFANALVEKVEDLVSGLFLPLYFVSSGLKTNVATIQGAQSWGLLVLVIFNACFGKIIGTVLVSLYCKVPLDQSLALGFLMNTKGLVELIVLNIGKDRGVLNDQIFAIMVLMAIFTTFMTTPLVLAVYKPGKSLTKADYKNRTVEETNRSNKPLCLMFCFQSIMNIPTIVNLIEASRGINRKENLSVYAMHLMELSERSSAILMAHKVRRNGLPFWNKDKSENNSSSSDMVVVAFEAFRRLSRVSVRPMTAISPMATIHEDICQSAERKKTAMVILPFHKHVRLDRTWETTRNDYRWINKKVMEESPCSVAILVDRGLGGTTRVASSDFSLTITVLFFGGNDDREALAFAVRMAEHPGISLTVVRFIPSDEFKPENVRIEITEDQLCSGATRLIDIEAITELKAKIKEKESSRSNSDSESHIIYEEKIVKCYEEVIEVIKEYSKSNLFLVGKSPEGSVASGINVRSDTPELGPIGNLLTESESVSTVASVLVVQQYIASRPVGISKNVTTEESLVEDSESP.

12 helical membrane passes run 30-50 (LPLLILQICIVLLLTRLLAFL), 58-75 (RVIAEIVGGILLGPSALG), 90-110 (LTVLDTLANLGLIFFLFLVGL), 124-144 (ALSIALAGITLPFVLGIGTSF), 159-179 (FLVFMGVALSITAFPVLARIL), 192-212 (IALSAAAVNDVAAWILLALAV), 222-242 (LTSLWVFLSGCGFVLFCIFVV), 276-296 (FVTDFIGIHALFGAFVIGVIF), 313-333 (LVSGLFLPLYFVSSGLKTNVA), 342-362 (GLLVLVIFNACFGKIIGTVLV), 374-394 (LALGFLMNTKGLVELIVLNIG), and 404-424 (IFAIMVLMAIFTTFMTTPLVL). Phosphoserine is present on residues Ser817 and Ser819.

This sequence belongs to the monovalent cation:proton antiporter 2 (CPA2) transporter (TC 2.A.37) family. CHX (TC 2.A.37.4) subfamily. In terms of tissue distribution, predominantly expressed in epidermal and cortical cells of mature roots but also barely detected in leaves.

It is found in the membrane. Operates as a K(+)/H(+) antiporter that controls K(+) acquisition and homeostasis. The sequence is that of Cation/H(+) antiporter 17 (CHX17) from Arabidopsis thaliana (Mouse-ear cress).